Here is an 87-residue protein sequence, read N- to C-terminus: Large ribosomal subunit protein bL27 (87 aa).

The segment at 1–20 is disordered; it reads MAHKKAGGSSRNGRDSESKR.

It belongs to the bacterial ribosomal protein bL27 family.

The sequence is that of Large ribosomal subunit protein bL27 from Thiobacillus denitrificans (strain ATCC 25259 / T1).